The following is a 188-amino-acid chain: Threonylcarbamoyl-AMP synthase (188 aa).

A YrdC-like domain is found at 4–188 (VENLQQAVDA…ARSLQVLRQG (185 aa)).

This sequence belongs to the SUA5 family. TsaC subfamily.

Its subcellular location is the cytoplasm. It carries out the reaction L-threonine + hydrogencarbonate + ATP = L-threonylcarbamoyladenylate + diphosphate + H2O. In terms of biological role, required for the formation of a threonylcarbamoyl group on adenosine at position 37 (t(6)A37) in tRNAs that read codons beginning with adenine. Catalyzes the conversion of L-threonine, HCO(3)(-)/CO(2) and ATP to give threonylcarbamoyl-AMP (TC-AMP) as the acyladenylate intermediate, with the release of diphosphate. This chain is Threonylcarbamoyl-AMP synthase, found in Vibrio cholerae serotype O1 (strain ATCC 39541 / Classical Ogawa 395 / O395).